Reading from the N-terminus, the 226-residue chain is Fibronectin type III domain-containing protein 9 (226 aa).

A Fibronectin type-III domain is found at 1 to 101 (MNIEVGNVSH…FHTLDKSPLA (101 aa)). The helical transmembrane segment at 113–133 (LWVLMAILLACFTAVLAFICL) threads the bilayer.

Its subcellular location is the membrane. The sequence is that of Fibronectin type III domain-containing protein 9 (Fndc9) from Mus musculus (Mouse).